The sequence spans 636 residues: Chitin synthase VI (636 aa).

The next 4 helical transmembrane spans lie at 23–43 (LQWF…LFCI), 374–394 (TIRT…TTTA), 399–419 (LPVG…LYFG), and 427–447 (IWFY…YMVY). Residues 595–636 (QRLRLEQRPRTGPSLNARWQNGPQASETSQGRSQVDDVGIAF) form a disordered region. Residues 607-627 (PSLNARWQNGPQASETSQGRS) show a composition bias toward polar residues.

The protein belongs to the chitin synthase family. Class VI subfamily. Moderately expressed during appressorium formation.

It localises to the cell membrane. It carries out the reaction [(1-&gt;4)-N-acetyl-beta-D-glucosaminyl](n) + UDP-N-acetyl-alpha-D-glucosamine = [(1-&gt;4)-N-acetyl-beta-D-glucosaminyl](n+1) + UDP + H(+). Functionally, polymerizes chitin, a structural polymer of the cell wall and septum, by transferring the sugar moiety of UDP-GlcNAc to the non-reducing end of the growing chitin polymer. Contributes to the production of conidia but is the only chitine synthase that does not contribute to the ability of fungal conidia to germinate. Involved in fungal stress tolerances. The protein is Chitin synthase VI of Metarhizium acridum (strain CQMa 102).